The following is a 72-amino-acid chain: Gas vesicle protein A (72 aa).

It belongs to the gas vesicle GvpA family. In terms of assembly, the gas vesicle shell is 2 nm thick and consists of a single layer of this protein. It forms helical ribs nearly perpendicular to the long axis of the vesicle.

It is found in the gas vesicle shell. In terms of biological role, gas vesicles are hollow, gas filled proteinaceous nanostructures found in some microorganisms. During planktonic growth they allow positioning of the organism at a favorable depth for light or nutrient acquisition. GvpA forms the protein shell. In Geotalea uraniireducens (strain Rf4) (Geobacter uraniireducens), this protein is Gas vesicle protein A.